The following is a 387-amino-acid chain: 2-alkyl-3-oxoalkanoate reductase (387 aa).

Tyr190 functions as the Proton acceptor in the catalytic mechanism. Lys194 is a binding site for NADP(+).

This sequence belongs to the 3-beta-HSD family.

The catalysed reaction is a (2R,3S)-2-alkyl-3-hydroxyalkanoate + NADP(+) = an (R)-2-alkyl-3-oxoalkanoate + NADPH + H(+). Involved in olefin biosynthesis. Catalyzes the reversible stereospecific NADPH-dependent reduction of 2-alkyl-3-oxoalkanoic acids to 2-alkyl-3-hydroxyalkanoic acids. The S.oneidensis oleABCD genes produce 3,6,9,12,15,19,22,25,28-hentriacontanonaene, which may aid the cells in adapting to a sudden drop in temperature. This chain is 2-alkyl-3-oxoalkanoate reductase, found in Shewanella oneidensis (strain ATCC 700550 / JCM 31522 / CIP 106686 / LMG 19005 / NCIMB 14063 / MR-1).